Reading from the N-terminus, the 354-residue chain is Methionine aminotransferase BCAT4 (354 aa).

N6-(pyridoxal phosphate)lysine is present on K198.

The protein belongs to the class-IV pyridoxal-phosphate-dependent aminotransferase family. Requires pyridoxal 5'-phosphate as cofactor. In terms of tissue distribution, mostly expressed in phloem.

Its subcellular location is the cytoplasm. The enzyme catalyses a 2-oxocarboxylate + L-methionine = 4-methylsulfanyl-2-oxobutanoate + an L-alpha-amino acid. Functionally, converts 2-oxo acids to branched-chain amino acids. Shows activity with L-Leu, L-Ile and L-Val as amino donors and alpha-keto-glutarate as an amino acceptor, but no activity for D-isomers of Leu, Ile, Val, Asp, Glu or Ala. Acts on methionine and its derivatives and the corresponding 2-oxo acids. Catalyzes the initial deamination of methionine to 4-methylthio-2-oxobutyrate as well as the transamination of other typical intermediates of the methionine chain elongation pathway. The chain is Methionine aminotransferase BCAT4 (BCAT4) from Arabidopsis thaliana (Mouse-ear cress).